The chain runs to 172 residues: MEFKQHIKEVENWPKEGISFKDITSLMQNGPAYKQSVDALIDYARKQGADVIAGPEARGFVVGCPAAYAMEIGFVPVRKEGKLPRETVRVEYGLEYGKDVLTMHHDAIQPGQRVVILDDLLATGGTIEATIKMIEQLGGTVAGIGFLIELDGLGGREKLEGYDILSLIRYAD.

The protein belongs to the purine/pyrimidine phosphoribosyltransferase family. As to quaternary structure, homodimer.

The protein resides in the cytoplasm. It catalyses the reaction AMP + diphosphate = 5-phospho-alpha-D-ribose 1-diphosphate + adenine. The protein operates within purine metabolism; AMP biosynthesis via salvage pathway; AMP from adenine: step 1/1. In terms of biological role, catalyzes a salvage reaction resulting in the formation of AMP, that is energically less costly than de novo synthesis. This Exiguobacterium sibiricum (strain DSM 17290 / CCUG 55495 / CIP 109462 / JCM 13490 / 255-15) protein is Adenine phosphoribosyltransferase.